A 312-amino-acid polypeptide reads, in one-letter code: 2,3-dihydroxyphenylpropionate/2,3-dihydroxicinnamic acid 1,2-dioxygenase 1 (312 aa).

His115 acts as the Proton donor in catalysis. Residue His179 is the Proton acceptor of the active site.

This sequence belongs to the LigB/MhpB extradiol dioxygenase family. Homotetramer. It depends on Fe(2+) as a cofactor.

The catalysed reaction is 3-(2,3-dihydroxyphenyl)propanoate + O2 = (2Z,4E)-2-hydroxy-6-oxonona-2,4-dienedioate + H(+). It carries out the reaction (2E)-3-(2,3-dihydroxyphenyl)prop-2-enoate + O2 = (2Z,4E,7E)-2-hydroxy-6-oxonona-2,4,7-trienedioate + H(+). It participates in aromatic compound metabolism; 3-phenylpropanoate degradation. Its function is as follows. Catalyzes the non-heme iron(II)-dependent oxidative cleavage of 2,3-dihydroxyphenylpropionic acid and 2,3-dihydroxicinnamic acid into 2-hydroxy-6-ketononadienedioate and 2-hydroxy-6-ketononatrienedioate, respectively. The sequence is that of 2,3-dihydroxyphenylpropionate/2,3-dihydroxicinnamic acid 1,2-dioxygenase 1 from Dechloromonas aromatica (strain RCB).